The chain runs to 388 residues: Succinate--CoA ligase [ADP-forming] subunit beta (388 aa).

In terms of domain architecture, ATP-grasp spans 9–244 (KQLFARYGLP…HSQEDEREAH (236 aa)). ATP is bound by residues Lys46, 53-55 (GRG), Glu99, Thr102, and Glu107. Mg(2+) contacts are provided by Asn199 and Asp213. Substrate is bound by residues Asn264 and 321-323 (GIV).

It belongs to the succinate/malate CoA ligase beta subunit family. Heterotetramer of two alpha and two beta subunits. It depends on Mg(2+) as a cofactor.

It catalyses the reaction succinate + ATP + CoA = succinyl-CoA + ADP + phosphate. It carries out the reaction GTP + succinate + CoA = succinyl-CoA + GDP + phosphate. Its pathway is carbohydrate metabolism; tricarboxylic acid cycle; succinate from succinyl-CoA (ligase route): step 1/1. Succinyl-CoA synthetase functions in the citric acid cycle (TCA), coupling the hydrolysis of succinyl-CoA to the synthesis of either ATP or GTP and thus represents the only step of substrate-level phosphorylation in the TCA. The beta subunit provides nucleotide specificity of the enzyme and binds the substrate succinate, while the binding sites for coenzyme A and phosphate are found in the alpha subunit. This Sodalis glossinidius (strain morsitans) protein is Succinate--CoA ligase [ADP-forming] subunit beta.